The chain runs to 480 residues: Mannose-1-phosphate guanylyltransferase ManC (480 aa).

Belongs to the mannose-6-phosphate isomerase type 2 family.

The catalysed reaction is alpha-D-mannose 1-phosphate + GTP + H(+) = GDP-alpha-D-mannose + diphosphate. It participates in nucleotide-sugar biosynthesis; GDP-alpha-D-mannose biosynthesis; GDP-alpha-D-mannose from alpha-D-mannose 1-phosphate (GTP route): step 1/1. Its function is as follows. Involved in the biosynthesis of the capsular polysaccharide colanic acid. This Salmonella typhimurium (strain LT2 / SGSC1412 / ATCC 700720) protein is Mannose-1-phosphate guanylyltransferase ManC (manC).